The following is a 480-amino-acid chain: Protein nucleotidyltransferase YdiU (480 aa).

Residues glycine 86, glycine 88, arginine 89, lysine 109, aspartate 121, glycine 122, arginine 172, and arginine 179 each contribute to the ATP site. Residue aspartate 248 is the Proton acceptor of the active site. The Mg(2+) site is built by asparagine 249 and aspartate 258. Aspartate 258 lines the ATP pocket.

This sequence belongs to the SELO family. Requires Mg(2+) as cofactor. Mn(2+) serves as cofactor.

It carries out the reaction L-seryl-[protein] + ATP = 3-O-(5'-adenylyl)-L-seryl-[protein] + diphosphate. It catalyses the reaction L-threonyl-[protein] + ATP = 3-O-(5'-adenylyl)-L-threonyl-[protein] + diphosphate. The catalysed reaction is L-tyrosyl-[protein] + ATP = O-(5'-adenylyl)-L-tyrosyl-[protein] + diphosphate. The enzyme catalyses L-histidyl-[protein] + UTP = N(tele)-(5'-uridylyl)-L-histidyl-[protein] + diphosphate. It carries out the reaction L-seryl-[protein] + UTP = O-(5'-uridylyl)-L-seryl-[protein] + diphosphate. It catalyses the reaction L-tyrosyl-[protein] + UTP = O-(5'-uridylyl)-L-tyrosyl-[protein] + diphosphate. Its function is as follows. Nucleotidyltransferase involved in the post-translational modification of proteins. It can catalyze the addition of adenosine monophosphate (AMP) or uridine monophosphate (UMP) to a protein, resulting in modifications known as AMPylation and UMPylation. The chain is Protein nucleotidyltransferase YdiU from Salmonella schwarzengrund (strain CVM19633).